Reading from the N-terminus, the 1479-residue chain is Type VII secretion system protein EssC (1479 aa).

Residues 1-189 form a required for substrate secretion, protein missing this segment is unstable region; the sequence is MHKLIIKYNK…ASSLIRLTQE (189 aa). The Cytoplasmic segment spans residues 1–229; that stretch reads MHKLIIKYNK…RPPQPIQKNN (229 aa). The chain crosses the membrane as a helical span at residues 230-252; it reads TVIWRSIIPPLVMIALTVVIFLV. Residues 253–256 are Extracellular-facing; the sequence is RPIG. Residues 257–279 form a helical membrane-spanning segment; it reads IYILMMIGMSTVTIVFGITTYFS. The Cytoplasmic portion of the chain corresponds to 280–1479; it reads EKKKYNKDVE…QAYQKIRWFK (1200 aa). 2 consecutive FtsK domains span residues 652–846 and 997–1183; these read DDIL…QDSN and QGPM…SEVS. ATP is bound by residues 672–679 and 1014–1021; these read GTTGSGKS and GSPGYGRT. The required for substrate secretion, truncated protein is stable stretch occupies residues 1249–1479; it reads MMPDEIKYED…QAYQKIRWFK (231 aa).

Belongs to the EssC family. In terms of assembly, homooligomer. Interacts with EsaE.

It localises to the cell membrane. Component of the type VII secretion system (Ess). Required for the secretion of substrates including EsxA and EsxB. However, unable to support secretion of the substrate protein EsxC. The chain is Type VII secretion system protein EssC from Staphylococcus aureus (strain NCTC 8325 / PS 47).